Reading from the N-terminus, the 132-residue chain is Small ribosomal subunit protein uS8 (132 aa).

This sequence belongs to the universal ribosomal protein uS8 family. In terms of assembly, part of the 30S ribosomal subunit. Contacts proteins S5 and S12.

Its function is as follows. One of the primary rRNA binding proteins, it binds directly to 16S rRNA central domain where it helps coordinate assembly of the platform of the 30S subunit. In Streptomyces griseus subsp. griseus (strain JCM 4626 / CBS 651.72 / NBRC 13350 / KCC S-0626 / ISP 5235), this protein is Small ribosomal subunit protein uS8.